The sequence spans 434 residues: dTDP-D-glucose 4,6-dehydratase (434 aa).

Thr-134 lines the substrate pocket. Asp-135 serves as the catalytic Proton donor. Residues Glu-136 and Tyr-169 each act as proton acceptor in the active site. Over residues 286–309 the composition is skewed to low complexity; the sequence is NNNNNNNNNNNNNNNNNNNNNNNN. The tract at residues 286–310 is disordered; the sequence is NNNNNNNNNNNNNNNNNNNNNNNND.

This sequence belongs to the NAD(P)-dependent epimerase/dehydratase family. dTDP-glucose dehydratase subfamily. The cofactor is NAD(+).

The enzyme catalyses dTDP-alpha-D-glucose = dTDP-4-dehydro-6-deoxy-alpha-D-glucose + H2O. The polypeptide is dTDP-D-glucose 4,6-dehydratase (tgds) (Dictyostelium discoideum (Social amoeba)).